We begin with the raw amino-acid sequence, 1088 residues long: Serine/threonine-protein kinase LATS2 (1088 aa).

The segment at 24–49 (EGLKQPSKSSVQGLPAGPNSDTSLDA) is disordered. S83 is modified (phosphoserine; by AURKA). The UBA domain occupies 98–139 (EVNRQMLQELVNAGCDQEMAGRALKQTGSRSIEAALEYISKM). The tract at residues 101–141 (RQMLQELVNAGCDQEMAGRALKQTGSRSIEAALEYISKMGY) is interaction with ubiquitinated AMOTL2. The span at 271–280 (RSPSFQSKTP) shows a compositional bias: polar residues. Residues 271–323 (RSPSFQSKTPPETGGYASLPTKGQGGPPGAGLAFPPPAAGLYVPHPHHKQAGP) are disordered. Position 279 is a phosphothreonine (T279). Phosphoserine is present on S380. Disordered regions lie at residues 383–428 (KPGL…SLPA) and 454–483 (PQTAVGPSHPAWVPAPAPAPAPAPAPAAEG). Residues 404-413 (SRTNSFNSHQ) show a composition bias toward polar residues. The span at 466-478 (VPAPAPAPAPAPA) shows a compositional bias: pro residues. Positions 515–518 (PPPY) match the PPxY motif motif. The interval 543 to 592 (SLRAGPNEPEGGDKSRKSAKGDKGGKDKKQIQTSPVPVRKNSRDEEKRES) is disordered. A compositionally biased stretch (basic and acidic residues) spans 553–572 (GGDKSRKSAKGDKGGKDKKQ). S576 is subject to Phosphoserine. Over residues 583-592 (NSRDEEKRES) the composition is skewed to basic and acidic residues. The Protein kinase domain maps to 668 to 973 (FVKIKTLGIG…ADDLKAHPFF (306 aa)). ATP contacts are provided by residues 674–682 (LGIGAFGEV) and K697. Catalysis depends on D791, which acts as the Proton acceptor. The region spanning 974–1052 (SAIDFSSDIR…RRFFDDNGYP (79 aa)) is the AGC-kinase C-terminal domain. The interval 994-1022 (SHPMDTSNFDPVDEESPWNDASEGSTKAW) is disordered. At T1041 the chain carries Phosphothreonine. The segment at 1056 to 1088 (PKPSGAEASQAESSDLESSDLVDQTEGCQPVYV) is disordered.

Belongs to the protein kinase superfamily. AGC Ser/Thr protein kinase family. As to quaternary structure, interacts with and is phosphorylated by AURKA. Binds to AR. Interacts with AJUBA during mitosis and this complex regulates organization of the spindle apparatus through recruitment of gamma-tubulin to the centrosome. Interacts (via PPxY motif) with YAP1 (via WW domains). Interacts with MOB1A and MOB1B. Interacts with LIMD1, WTIP and AJUBA. Interacts with SNAI1. Interacts with WWC1, WWC2 and WWC3 (via their WW domains). Interacts (via UBA domain) with ubiquitinated AMOTL2; the interaction promotes LATS2 phosphorylation of YAP1. Mg(2+) is required as a cofactor. In terms of processing, autophosphorylated and phosphorylated during M-phase and the G1/S-phase of the cell cycle. Phosphorylated and activated by STK3/MST2. Phosphorylated by MAP4Ks; in parallel to STK3/MST2 and resulting to its activation. Phosphorylation by NUAK2 may regulate its activity in phosphorylation and inactivation YAP1. In terms of tissue distribution, expressed at high levels in heart and skeletal muscle and at lower levels in all other tissues examined.

The protein localises to the cytoplasm. It localises to the cytoskeleton. The protein resides in the microtubule organizing center. It is found in the centrosome. Its subcellular location is the spindle pole. The protein localises to the nucleus. It carries out the reaction L-seryl-[protein] + ATP = O-phospho-L-seryl-[protein] + ADP + H(+). It catalyses the reaction L-threonyl-[protein] + ATP = O-phospho-L-threonyl-[protein] + ADP + H(+). In terms of biological role, negative regulator of YAP1 in the Hippo signaling pathway that plays a pivotal role in organ size control and tumor suppression by restricting proliferation and promoting apoptosis. The core of this pathway is composed of a kinase cascade wherein STK3/MST2 and STK4/MST1, in complex with its regulatory protein SAV1, phosphorylates and activates LATS1/2 in complex with its regulatory protein MOB1, which in turn phosphorylates and inactivates YAP1 oncoprotein and WWTR1/TAZ. Phosphorylation of YAP1 by LATS2 inhibits its translocation into the nucleus to regulate cellular genes important for cell proliferation, cell death, and cell migration. Also phosphorylates YAP1 in response to cell contact inhibition-driven WWP1 ubiquitination of AMOTL2, which results in LATS2 activation. Acts as a tumor suppressor which plays a critical role in centrosome duplication, maintenance of mitotic fidelity and genomic stability. Negatively regulates G1/S transition by down-regulating cyclin E/CDK2 kinase activity. Negative regulator of the androgen receptor. Phosphorylates SNAI1 in the nucleus leading to its nuclear retention and stabilization, which enhances its epithelial-mesenchymal transition and tumor cell invasion/migration activities. This tumor-promoting activity is independent of its effects upon YAP1 or WWTR1/TAZ. Acts as an activator of the NLRP3 inflammasome by mediating phosphorylation of 'Ser-265' of NLRP3 following NLRP3 palmitoylation, promoting NLRP3 activation by NEK7. This is Serine/threonine-protein kinase LATS2 from Homo sapiens (Human).